The sequence spans 164 residues: Translation initiation factor IF-3 (164 aa).

Belongs to the IF-3 family. As to quaternary structure, monomer.

The protein localises to the cytoplasm. Functionally, IF-3 binds to the 30S ribosomal subunit and shifts the equilibrium between 70S ribosomes and their 50S and 30S subunits in favor of the free subunits, thus enhancing the availability of 30S subunits on which protein synthesis initiation begins. In Bordetella bronchiseptica (strain ATCC BAA-588 / NCTC 13252 / RB50) (Alcaligenes bronchisepticus), this protein is Translation initiation factor IF-3.